The sequence spans 260 residues: DNA repair protein RecO (260 aa).

This sequence belongs to the RecO family.

In terms of biological role, involved in DNA repair and RecF pathway recombination. The sequence is that of DNA repair protein RecO from Chlorobaculum parvum (strain DSM 263 / NCIMB 8327) (Chlorobium vibrioforme subsp. thiosulfatophilum).